A 564-amino-acid chain; its full sequence is Excitatory amino acid transporter 4 (564 aa).

Topologically, residues Met-1–Arg-55 are cytoplasmic. Position 2 is a phosphoserine (Ser-2). Helical transmembrane passes span Asn-56–Leu-76, Met-99–Leu-119, and Val-133–Ile-153. Asn-216, Asn-232, and Asn-239 each carry an N-linked (GlcNAc...) asparagine glycan. Transmembrane regions (helical) follow at residues Ser-262–Val-285, Phe-295–Ile-322, and Leu-344–Ile-365. The discontinuously helical intramembrane region spans Phe-371–Leu-401. Ser-388 to Ser-390 is an L-aspartate binding site. A helical membrane pass occupies residues Ile-411–Phe-437. Residues Gly-419, Thr-421, and Asn-423 each contribute to the Na(+) site. L-aspartate-binding positions include Thr-427, Ile-468–Gly-472, Asp-501, and Asn-508. Positions Ile-451–Gly-484 form an intramembrane region, discontinuously helical. A helical membrane pass occupies residues Trp-498–Ile-519. Na(+)-binding residues include Asn-508 and Asp-512.

Belongs to the dicarboxylate/amino acid:cation symporter (DAACS) (TC 2.A.23) family. SLC1A6 subfamily. Homotrimer. As to expression, detected in brain, cerebellum and hippocampus.

The protein resides in the cell membrane. The catalysed reaction is K(+)(in) + L-glutamate(out) + 3 Na(+)(out) + H(+)(out) = K(+)(out) + L-glutamate(in) + 3 Na(+)(in) + H(+)(in). It catalyses the reaction K(+)(in) + L-aspartate(out) + 3 Na(+)(out) + H(+)(out) = K(+)(out) + L-aspartate(in) + 3 Na(+)(in) + H(+)(in). The enzyme catalyses D-aspartate(out) + K(+)(in) + 3 Na(+)(out) + H(+)(out) = D-aspartate(in) + K(+)(out) + 3 Na(+)(in) + H(+)(in). Its function is as follows. Sodium-dependent, high-affinity amino acid transporter that mediates the uptake of L-glutamate and also L-aspartate and D-aspartate. Functions as a symporter that transports one amino acid molecule together with two or three Na(+) ions and one proton, in parallel with the counter-transport of one K(+) ion. Mediates Cl(-) flux that is not coupled to amino acid transport; this avoids the accumulation of negative charges due to aspartate and Na(+) symport. Plays a redundant role in the rapid removal of released glutamate from the synaptic cleft, which is essential for terminating the postsynaptic action of glutamate. The polypeptide is Excitatory amino acid transporter 4 (SLC1A6) (Canis lupus familiaris (Dog)).